The primary structure comprises 745 residues: Putative cryptochrome DASH, mitochondrial (745 aa).

Residues M1–I22 constitute a mitochondrion transit peptide. The Photolyase/cryptochrome alpha/beta domain occupies F23–Y166. 2 disordered regions span residues K563–G688 and G702–A745. Residues S571 to T584 show a composition bias toward basic residues. Residues G591–S603 show a composition bias toward low complexity. Over residues G604–N616 the composition is skewed to gly residues. Positions Q632–G648 are enriched in low complexity. Composition is skewed to gly residues over residues R672–G688 and G702–R718. Polar residues predominate over residues Q735–A745.

Belongs to the DNA photolyase class-1 family. FAD serves as cofactor. It depends on (6R)-5,10-methylene-5,6,7,8-tetrahydrofolate as a cofactor.

Its subcellular location is the mitochondrion. Its function is as follows. May have a photoreceptor function. The sequence is that of Putative cryptochrome DASH, mitochondrial (cry) from Neurospora crassa (strain ATCC 24698 / 74-OR23-1A / CBS 708.71 / DSM 1257 / FGSC 987).